The sequence spans 417 residues: Cyanophycinase (417 aa).

The N-terminal stretch at 1 to 23 (MIRSFIRSSALLLALLPVTGYSA) is a signal peptide. Catalysis depends on charge relay system residues serine 169, aspartate 188, and histidine 222.

Belongs to the peptidase S51 family.

It localises to the secreted. It catalyses the reaction [L-4-(L-arginin-2-N-yl)aspartate](n) + H2O = [L-4-(L-arginin-2-N-yl)aspartate](n-1) + L-4-(L-arginin-2-N-yl)aspartate. Its activity is regulated as follows. Inhibited by serine protease inhibitors. Inhibited by N-Bromo-succinimide. Functionally, exopeptidase that catalyzes the hydrolytic cleavage of multi-L-arginyl-poly-L-aspartic acid (cyanophycin; a water-insoluble reserve polymer) into aspartate-arginine dipeptides. The chain is Cyanophycinase (cphE) from Pseudomonas anguilliseptica.